The chain runs to 184 residues: Ribosome-recycling factor (184 aa).

Belongs to the RRF family.

It is found in the cytoplasm. Responsible for the release of ribosomes from messenger RNA at the termination of protein biosynthesis. May increase the efficiency of translation by recycling ribosomes from one round of translation to another. In Stenotrophomonas maltophilia (strain K279a), this protein is Ribosome-recycling factor.